The chain runs to 3387 residues: Genome polyprotein (3387 aa).

The Cytoplasmic portion of the chain corresponds to 1-100; that stretch reads MNQRKKVVRP…LNILNGRKRS (100 aa). Positions 36–71 are hydrophobic; homodimerization of capsid protein C; that stretch reads LFSGKGPLRMVLAFITFLRVLSIPPTAGILKRWGQL. Residues 100–113 constitute a propeptide, ER anchor for the capsid protein C, removed in mature form by serine protease NS3; sequence STITLLCLIPTVMA. Residues 101–117 form a helical membrane-spanning segment; the sequence is TITLLCLIPTVMAFSLS. The Extracellular segment spans residues 118 to 237; it reads TRDGEPLMIV…GAWKHAQRVE (120 aa). An N-linked (GlcNAc...) asparagine; by host glycan is attached at N182. The chain crosses the membrane as a helical span at residues 238–258; it reads SWILRNPGFALLAGFMAYMIG. Topologically, residues 259–265 are cytoplasmic; sequence QTGIQRT. Residues 266–279 traverse the membrane as a helical segment; that stretch reads VFFVLMMLVAPSYG. The Extracellular portion of the chain corresponds to 280 to 725; it reads MRCVGVGNRD…HQVFGSVYTT (446 aa). 4 disulfides stabilise this stretch: C282–C309, C339–C400, C353–C384, and C371–C395. Residue N346 is glycosylated (N-linked (GlcNAc...) asparagine; by host). Residues 377 to 390 are fusion peptide; the sequence is DRGWGNGCGLFGKG. N-linked (GlcNAc...) asparagine; by host glycosylation is present at N432. 2 disulfides stabilise this stretch: C464/C564 and C581/C612. The chain crosses the membrane as a helical span at residues 726–746; it reads MFGGVSWMIRILIGFLVLWIG. The Cytoplasmic portion of the chain corresponds to 747–751; it reads TNSRN. The chain crosses the membrane as a helical span at residues 752–772; the sequence is TSMAMTCIAVGGITLFLGFTV. Over 773-1194 the chain is Extracellular; it reads QADMGCVASW…MLGDTMSGRI (422 aa). 6 disulfides stabilise this stretch: C778–C789, C829–C917, C953–C997, C1054–C1103, C1065–C1087, and C1086–C1090. N-linked (GlcNAc...) asparagine; by host glycosylation is found at N904 and N981. A helical membrane pass occupies residues 1195-1218; the sequence is GGQIHLAIMAVFKMSPGYVLGVFL. Residues 1219 to 1224 lie on the Lumenal side of the membrane; the sequence is RKLTSR. The chain crosses the membrane as a helical span at residues 1225–1243; sequence ETALMVIGMAMTTVLSIPH. Residues 1244-1267 lie on the Cytoplasmic side of the membrane; that stretch reads DLMELIDGISLGLILLKIVTQFDN. A helical transmembrane segment spans residues 1268 to 1288; sequence TQVGTLALSLTFIRSTMPLVM. A1289 is a topological domain (lumenal). The helical transmembrane segment at 1290-1308 threads the bilayer; that stretch reads WRTIMAVLFVVTLIPLCRT. At 1309 to 1316 the chain is on the lumenal side; it reads SCLQKQSH. Residues 1317 to 1337 form a helical membrane-spanning segment; the sequence is WVEITALILGAQALPVYLMTL. Topologically, residues 1338–1345 are cytoplasmic; the sequence is MKGASRRS. The chain crosses the membrane as a helical span at residues 1346 to 1366; that stretch reads WPLNEGIMAVGLVSLLGSALL. The Lumenal segment spans residues 1367–1369; that stretch reads KND. Residues 1370 to 1390 form a helical membrane-spanning segment; the sequence is VPLAGPMVAGGLLLAAYVMSG. The Cytoplasmic segment spans residues 1391-1437; that stretch reads SSADLSLEKAANVQWDEMADITGSSPIIEVKQDEDGSFSIRDVEETN. The interval 1397–1436 is interacts with and activates NS3 protease; it reads LEKAANVQWDEMADITGSSPIIEVKQDEDGSFSIRDVEET. An intramembrane region (helical) is located at residues 1438 to 1458; it reads MITLLVKLALITVSGLYPLAI. The Cytoplasmic portion of the chain corresponds to 1459–2143; the sequence is PVTMTLWYMW…QHALNELPES (685 aa). Residues 1475–1652 form the Peptidase S7 domain; that stretch reads SGALWDVPSP…ERIGEPDYEV (178 aa). Catalysis depends on charge relay system; for serine protease NS3 activity residues H1525, D1549, and S1609. A Helicase ATP-binding domain is found at 1654 to 1810; sequence EDIFRKKRLT…QSNSPIEDIE (157 aa). The interval 1658 to 1661 is important for RNA-binding; the sequence is RKKR. 1667–1674 lines the ATP pocket; sequence LHPGAGKT. A DEAH box motif is present at residues 1758-1761; that stretch reads DEAH. The Helicase C-terminal domain occupies 1820-1987; that stretch reads TGFDWITDYQ…IIPTLFGPER (168 aa). The residue at position 1862 (K1862) is an N6-acetyllysine; by host. Residues 2144–2164 form a helical membrane-spanning segment; sequence LETLMLVALLGAMTAGIFLFF. Topologically, residues 2165–2169 are lumenal; sequence MQGKG. Residues 2170–2190 constitute an intramembrane region (helical); it reads IGKLSMGLITIAVASGLLWVA. A topological domain (lumenal) is located at residue E2191. A helical transmembrane segment spans residues 2192-2212; the sequence is IQPQWIAASIILEFFLMVLLI. The Cytoplasmic segment spans residues 2213–2225; it reads PEPEKQRTPQDNQ. Residues 2226–2246 form a helical membrane-spanning segment; that stretch reads LIYVILTILTIIGLIAANEMG. At 2247-2270 the chain is on the lumenal side; the sequence is LIEKTKTDFGFYQVKTETTILDVD. Positions 2271–2291 form an intramembrane region, helical; sequence LRPASAWTLYAVATTILTPML. The Lumenal segment spans residues 2292–2301; that stretch reads RHTIENTSAN. N-linked (GlcNAc...) asparagine; by host glycans are attached at residues N2297 and N2301. The helical intramembrane region spans 2302 to 2322; that stretch reads LSLAAIANQAAVLMGLGKGWP. Over 2323 to 2343 the chain is Lumenal; sequence LHRMDLGVPLLAMGCYSQVNP. The helical transmembrane segment at 2344–2364 threads the bilayer; sequence TTLTASLVMLLVHYAIIGPGL. The Cytoplasmic segment spans residues 2365 to 2409; that stretch reads QAKATREAQKRTAAGIMKNPTVDGITVIDLEPISYDPKFEKQLGQ. The helical transmembrane segment at 2410–2430 threads the bilayer; the sequence is VMLLVLCAGQLLLMRTTWAFC. Residues 2431-2455 lie on the Lumenal side of the membrane; it reads EVLTLATGPILTLWEGNPGRFWNTT. N2453 is a glycosylation site (N-linked (GlcNAc...) asparagine; by host). The chain crosses the membrane as a helical span at residues 2456 to 2476; it reads IAVSTANIFRGSYLAGAGLAF. Topologically, residues 2477 to 3387 are cytoplasmic; the sequence is SLIKNAQTPR…SAPSESEGVL (911 aa). One can recognise an mRNA cap 0-1 NS5-type MT domain in the interval 2489–2751; sequence TGTTGETLGE…DVDLGAGTRS (263 aa). S2543 serves as a coordination point for S-adenosyl-L-methionine. S2543 is subject to Phosphoserine. K2548 (for 2'-O-MTase activity) is an active-site residue. The SUMO-interacting motif signature appears at 2564–2567; it reads VVDL. S-adenosyl-L-methionine contacts are provided by G2573, W2574, T2591, K2592, D2618, and V2619. D2633 (for 2'-O-MTase activity) is an active-site residue. I2634 contacts S-adenosyl-L-methionine. Catalysis depends on for 2'-O-MTase activity residues K2668 and E2704. Y2706 contacts S-adenosyl-L-methionine. Residues E2925, H2929, C2934, and C2937 each coordinate Zn(2+). One can recognise a RdRp catalytic domain in the interval 3016–3166; the sequence is LMYADDTAGW…PLDERFGTSL (151 aa). The Zn(2+) site is built by H3200, C3216, and C3335.

It in the N-terminal section; belongs to the class I-like SAM-binding methyltransferase superfamily. mRNA cap 0-1 NS5-type methyltransferase family. Homodimer. Interacts (via N-terminus) with host EXOC1 (via C-terminus); this interaction results in EXOC1 degradation through the proteasome degradation pathway. As to quaternary structure, forms heterodimers with envelope protein E in the endoplasmic reticulum and Golgi. In terms of assembly, homodimer; in the endoplasmic reticulum and Golgi. Interacts with protein prM. Interacts with non-structural protein 1. Homodimer; Homohexamer when secreted. Interacts with envelope protein E. As to quaternary structure, interacts (via N-terminus) with serine protease NS3. In terms of assembly, forms a heterodimer with serine protease NS3. May form homooligomers. Forms a heterodimer with NS2B. Interacts with NS4B. Interacts with unphosphorylated RNA-directed RNA polymerase NS5; this interaction stimulates RNA-directed RNA polymerase NS5 guanylyltransferase activity. Interacts with host SHFL. As to quaternary structure, interacts with host MAVS; this interaction inhibits the synthesis of IFN-beta. Interacts with host SHFL. Interacts with host AUP1; the interaction occurs in the presence of Dengue virus NS4B and induces lipophagy which facilitates production of virus progeny particles. In terms of assembly, interacts with serine protease NS3. Homodimer. Interacts with host STAT2; this interaction inhibits the phosphorylation of the latter, and, when all viral proteins are present (polyprotein), targets STAT2 for degradation. Interacts with serine protease NS3. Interacts with host PAF1 complex; the interaction may prevent the recruitment of the PAF1 complex to interferon-responsive genes, and thus reduces the immune response. Specific enzymatic cleavages in vivo yield mature proteins. Cleavages in the lumen of endoplasmic reticulum are performed by host signal peptidase, whereas cleavages in the cytoplasmic side are performed by serine protease NS3. Signal cleavage at the 2K-4B site requires a prior NS3 protease-mediated cleavage at the 4A-2K site. Post-translationally, cleaved in post-Golgi vesicles by a host furin, releasing the mature small envelope protein M, and peptide pr. This cleavage is incomplete as up to 30% of viral particles still carry uncleaved prM. In terms of processing, N-glycosylated. N-glycosylated. The excreted form is glycosylated and this is required for efficient secretion of the protein from infected cells. Post-translationally, acetylated by host KAT5. Acetylation modulates NS3 RNA-binding and unwinding activities and plays an important positive role for viral replication. In terms of processing, sumoylation of RNA-directed RNA polymerase NS5 increases NS5 protein stability allowing proper viral RNA replication. Phosphorylated on serines residues. This phosphorylation may trigger NS5 nuclear localization.

It is found in the virion. Its subcellular location is the host nucleus. The protein localises to the host cytoplasm. It localises to the host perinuclear region. The protein resides in the secreted. It is found in the virion membrane. Its subcellular location is the host endoplasmic reticulum membrane. The protein localises to the host mitochondrion. It catalyses the reaction Selective hydrolysis of -Xaa-Xaa-|-Yaa- bonds in which each of the Xaa can be either Arg or Lys and Yaa can be either Ser or Ala.. The enzyme catalyses RNA(n) + a ribonucleoside 5'-triphosphate = RNA(n+1) + diphosphate. It carries out the reaction a ribonucleoside 5'-triphosphate + H2O = a ribonucleoside 5'-diphosphate + phosphate + H(+). The catalysed reaction is ATP + H2O = ADP + phosphate + H(+). It catalyses the reaction a 5'-end (5'-triphosphoguanosine)-ribonucleoside in mRNA + S-adenosyl-L-methionine = a 5'-end (N(7)-methyl 5'-triphosphoguanosine)-ribonucleoside in mRNA + S-adenosyl-L-homocysteine. The enzyme catalyses a 5'-end (N(7)-methyl 5'-triphosphoguanosine)-ribonucleoside in mRNA + S-adenosyl-L-methionine = a 5'-end (N(7)-methyl 5'-triphosphoguanosine)-(2'-O-methyl-ribonucleoside) in mRNA + S-adenosyl-L-homocysteine + H(+). In terms of biological role, plays a role in virus budding by binding to the cell membrane and gathering the viral RNA into a nucleocapsid that forms the core of a mature virus particle. During virus entry, may induce genome penetration into the host cytoplasm after hemifusion induced by the surface proteins. Can migrate to the cell nucleus where it modulates host functions. Overcomes the anti-viral effects of host EXOC1 by sequestering and degrading the latter through the proteasome degradation pathway. Functionally, regulates the ATPase activity of the NS3 helicase activity. NS4A allows NS3 helicase to conserve energy during unwinding. Plays a role in the inhibition of the host innate immune response. Interacts with host MAVS and thereby prevents the interaction between RIGI and MAVS. In turn, IFN-beta production is impaired. Interacts with host AUP1 which mediates induction of lipophagy in host cells and facilitates production of virus progeny particles. Inhibits RNA silencing by interfering with host Dicer. Its function is as follows. Prevents premature fusion activity of envelope proteins in trans-Golgi by binding to envelope protein E at pH6.0. After virion release in extracellular space, gets dissociated from E dimers. In terms of biological role, acts as a chaperone for envelope protein E during intracellular virion assembly by masking and inactivating envelope protein E fusion peptide. prM is the only viral peptide matured by host furin in the trans-Golgi network probably to avoid catastrophic activation of the viral fusion activity in acidic Golgi compartment prior to virion release. prM-E cleavage is inefficient, and many virions are only partially matured. These uncleaved prM would play a role in immune evasion. Functionally, may play a role in virus budding. Exerts cytotoxic effects by activating a mitochondrial apoptotic pathway through M ectodomain. May display a viroporin activity. Binds to host cell surface receptor and mediates fusion between viral and cellular membranes. Envelope protein is synthesized in the endoplasmic reticulum in the form of heterodimer with protein prM. They play a role in virion budding in the ER, and the newly formed immature particle is covered with 60 spikes composed of heterodimer between precursor prM and envelope protein E. The virion is transported to the Golgi apparatus where the low pH causes dissociation of PrM-E heterodimers and formation of E homodimers. prM-E cleavage is inefficient, and many virions are only partially matured. These uncleaved prM would play a role in immune evasion. Its function is as follows. Involved in immune evasion, pathogenesis and viral replication. Once cleaved off the polyprotein, is targeted to three destinations: the viral replication cycle, the plasma membrane and the extracellular compartment. Essential for viral replication. Required for formation of the replication complex and recruitment of other non-structural proteins to the ER-derived membrane structures. Excreted as a hexameric lipoparticle that plays a role against host immune response. Antagonizing the complement function. Binds to the host macrophages and dendritic cells. Inhibits signal transduction originating from Toll-like receptor 3 (TLR3). In terms of biological role, disrupts the host endothelial glycocalyx layer of host pulmonary microvascular endothelial cells, inducing degradation of sialic acid and shedding of heparan sulfate proteoglycans. NS1 induces expression of sialidases, heparanase, and activates cathepsin L, which activates heparanase via enzymatic cleavage. These effects are probably linked to the endothelial hyperpermeability observed in severe dengue disease. Functionally, component of the viral RNA replication complex that functions in virion assembly and antagonizes the host immune response. Required cofactor for the serine protease function of NS3. May have membrane-destabilizing activity and form viroporins. Its function is as follows. Displays three enzymatic activities: serine protease, NTPase and RNA helicase. NS3 serine protease, in association with NS2B, performs its autocleavage and cleaves the polyprotein at dibasic sites in the cytoplasm: C-prM, NS2A-NS2B, NS2B-NS3, NS3-NS4A, NS4A-2K and NS4B-NS5. NS3 RNA helicase binds RNA and unwinds dsRNA in the 3' to 5' direction. In terms of biological role, functions as a signal peptide for NS4B and is required for the interferon antagonism activity of the latter. Functionally, induces the formation of ER-derived membrane vesicles where the viral replication takes place. Inhibits interferon (IFN)-induced host STAT1 phosphorylation and nuclear translocation, thereby preventing the establishment of cellular antiviral state by blocking the IFN-alpha/beta pathway. Replicates the viral (+) and (-) RNA genome, and performs the capping of genomes in the cytoplasm. NS5 methylates viral RNA cap at guanine N-7 and ribose 2'-O positions. Besides its role in RNA genome replication, also prevents the establishment of cellular antiviral state by blocking the interferon-alpha/beta (IFN-alpha/beta) signaling pathway. Inhibits host TYK2 and STAT2 phosphorylation, thereby preventing activation of JAK-STAT signaling pathway. May reduce immune responses by preventing the recruitment of the host PAF1 complex to interferon-responsive genes. This chain is Genome polyprotein, found in Dengue virus type 4 (strain Dominica/814669/1981) (DENV-4).